The chain runs to 88 residues: MSEANLNRTLSGKVVSDKMNKTITVLVERKVKHPLYGKIMVRSKKYHVHDEANEFHTGDVVVIEECRPLSKTKAWRVVKLMQKAEQVS.

Belongs to the universal ribosomal protein uS17 family. In terms of assembly, part of the 30S ribosomal subunit.

In terms of biological role, one of the primary rRNA binding proteins, it binds specifically to the 5'-end of 16S ribosomal RNA. This is Small ribosomal subunit protein uS17 from Nitrosospira multiformis (strain ATCC 25196 / NCIMB 11849 / C 71).